Reading from the N-terminus, the 525-residue chain is G patch domain-containing protein 3 (525 aa).

Disordered stretches follow at residues 54 to 85 (ERGP…PASD) and 246 to 317 (EQEE…QERT). Residues 274-299 (DEPEDEGQQQEEEEESGSEEDDDRGE) show a composition bias toward acidic residues. Residues 300-317 (EWERHEALHEDVTGQERT) show a composition bias toward basic and acidic residues. Residues 411–459 (TKGIGRKVMERQGWAEGQGLGSRCSGVPEALDGDGQHPRCKRGLGYHGE) form the G-patch domain.

As to quaternary structure, interacts with mitochondrial MAVS; the interaction is markedly increased upon viral infection.

It is found in the nucleus. It localises to the cytoplasm. Its function is as follows. Involved in transcriptional regulation. It is able to activate transcription from CXCR4 promoter and therefore it might control neural crest cell migration involved in ocular and craniofacial development. Is a negative regulator of immune antiviral response, acting via down-regulation of RIG-I-like receptors signaling and inhibition of type I interferon production. The control mechanism involves interaction with mitochondrial MAVS and inhibition of MAVS assembly with downstream proteins implicated in antiviral response, such as TBK1 and TRAF6. This Mus musculus (Mouse) protein is G patch domain-containing protein 3 (Gpatch3).